We begin with the raw amino-acid sequence, 412 residues long: Putative competence-damage inducible protein (412 aa).

This sequence belongs to the CinA family.

This chain is Putative competence-damage inducible protein, found in Bacillus cereus (strain ATCC 14579 / DSM 31 / CCUG 7414 / JCM 2152 / NBRC 15305 / NCIMB 9373 / NCTC 2599 / NRRL B-3711).